The sequence spans 200 residues: MLEIVLASQNSSKLAEMQELLRDLEIKFIPQTEFSVPDIEETGSTFVENAIIKARHAAKQTGLPALADDSGLTIAALNSAPGVFSSRYAGKNATDAERIQKVLEALEAADDSDRSASFHCVIALMENENDPAPLICHGVWEGEIAREPRGKNGFGYDPIFYVPSHQRTAAELDPQEKNAISHRGQALEQLSTVLTEAFLV.

Residue 8–13 participates in substrate binding; sequence SQNSSK. Residues glutamate 40 and aspartate 69 each contribute to the Mg(2+) site. Catalysis depends on aspartate 69, which acts as the Proton acceptor. Residues serine 70, 154–157, lysine 177, and 182–183 each bind substrate; these read FGYD and HR.

It belongs to the HAM1 NTPase family. As to quaternary structure, homodimer. Mg(2+) serves as cofactor.

The catalysed reaction is XTP + H2O = XMP + diphosphate + H(+). It carries out the reaction dITP + H2O = dIMP + diphosphate + H(+). It catalyses the reaction ITP + H2O = IMP + diphosphate + H(+). Pyrophosphatase that catalyzes the hydrolysis of nucleoside triphosphates to their monophosphate derivatives, with a high preference for the non-canonical purine nucleotides XTP (xanthosine triphosphate), dITP (deoxyinosine triphosphate) and ITP. Seems to function as a house-cleaning enzyme that removes non-canonical purine nucleotides from the nucleotide pool, thus preventing their incorporation into DNA/RNA and avoiding chromosomal lesions. This is dITP/XTP pyrophosphatase from Coxiella burnetii (strain RSA 493 / Nine Mile phase I).